The chain runs to 146 residues: Endothelial differentiation-related factor 1 homolog (146 aa).

The disordered stretch occupies residues 13-53; the sequence is RKKGSAAQSKSKQAVTAAQRKGEAVETSKKWAAGQNKQHVV. Residues 17 to 31 show a composition bias toward low complexity; that stretch reads SAAQSKSKQAVTAAQ. Residues 32–41 show a composition bias toward basic and acidic residues; the sequence is RKGEAVETSK. The HTH cro/C1-type domain maps to 80-134; that stretch reads IQQGRQNKGLTQKDLATKINEKPQIIAEYECGKAIPNNQVMGKIERAIGLKLRGK. The H-T-H motif DNA-binding region spans 91–110; the sequence is QKDLATKINEKPQIIAEYEC.

Its subcellular location is the nucleus. Probable transcriptional coactivator. The chain is Endothelial differentiation-related factor 1 homolog (edf1) from Danio rerio (Zebrafish).